A 314-amino-acid chain; its full sequence is Replication initiation protein (314 aa).

Belongs to the plasmid replication initiation factor family.

This protein is probably a specific topoisomerase involved in initiating replication. This protein is specifically required and may be rate-limiting for replication of the plasmid in vivo. This chain is Replication initiation protein (repC), found in Staphylococcus aureus.